A 373-amino-acid polypeptide reads, in one-letter code: Enoyl-[acyl-carrier-protein] reductase, mitochondrial (373 aa).

The N-terminal 53 residues, 1–53 (MLVSRRLTGARARAPLLASLLEAWCRQGRTTSSYSAFSEPSHVRALVYGNHGD), are a transit peptide targeting the mitochondrion. N6-acetyllysine; alternate is present on K61. N6-succinyllysine; alternate is present on K61. Y94 functions as the Proton donor in the catalytic mechanism. Residues N167, 193–196 (NSGV), and 216–218 (RDR) each bind NADP(+). 2 positions are modified to N6-acetyllysine; alternate: K252 and K267. Residues K252 and K267 each carry the N6-succinyllysine; alternate modification. NADP(+)-binding positions include 285–288 (YGGM) and 310–312 (FWL). At K316 the chain carries N6-succinyllysine. K368 serves as a coordination point for NADP(+).

The protein belongs to the zinc-containing alcohol dehydrogenase family. Quinone oxidoreductase subfamily. In terms of assembly, homodimer. As to quaternary structure, interacts with PPARA in the nucleus and increases its activity.

It localises to the mitochondrion. The protein localises to the cytoplasm. It is found in the nucleus. It carries out the reaction a 2,3-saturated acyl-[ACP] + NADP(+) = a (2E)-enoyl-[ACP] + NADPH + H(+). It catalyses the reaction (2E)-butenoyl-[ACP] + NADPH + H(+) = butanoyl-[ACP] + NADP(+). The catalysed reaction is (2E)-hexenoyl-[ACP] + NADPH + H(+) = hexanoyl-[ACP] + NADP(+). The enzyme catalyses (2E)-octenoyl-[ACP] + NADPH + H(+) = octanoyl-[ACP] + NADP(+). It carries out the reaction (2E)-decenoyl-[ACP] + NADPH + H(+) = decanoyl-[ACP] + NADP(+). It catalyses the reaction (2E)-dodecenoyl-[ACP] + NADPH + H(+) = dodecanoyl-[ACP] + NADP(+). The catalysed reaction is (2E)-tetradecenoyl-[ACP] + NADPH + H(+) = tetradecanoyl-[ACP] + NADP(+). The enzyme catalyses (2E)-hexadecenoyl-[ACP] + NADPH + H(+) = hexadecanoyl-[ACP] + NADP(+). Functionally, catalyzes the NADPH-dependent reduction of trans-2-enoyl thioesters in mitochondrial fatty acid synthesis (fatty acid synthesis type II). Fatty acid chain elongation in mitochondria uses acyl carrier protein (ACP) as an acyl group carrier, but the enzyme accepts both ACP and CoA thioesters as substrates in vitro. Displays a preference for medium-chain over short- and long-chain substrates. May provide the octanoyl chain used for lipoic acid biosynthesis, regulating protein lipoylation and mitochondrial respiratory activity particularly in Purkinje cells. Involved in iron homeostasis; affecting Fe-S cluster assembly and ceramide metabolism. Required for proper morphology and bioenergetic functions of mitochondria. Required for maintenance of neurons. This is Enoyl-[acyl-carrier-protein] reductase, mitochondrial (Mecr) from Rattus norvegicus (Rat).